The primary structure comprises 138 residues: MTCYKHGKAVFKGMGKTVEKYPLVIAEEANIPFLLNIPGTGRRIIGEIYSVDEQLLHFLDDFEGCPNWYQRTPQEIEILEWEGTDDSPDERPAANSIITCFVYSTTCYQPEWLQLPYHKCYDAFGNHGLRYIRHRDII.

The active-site Proton acceptor is glutamate 63.

This sequence belongs to the gamma-glutamylcyclotransferase family.

The enzyme catalyses epsilon-(gamma-L-glutamyl)-L-lysine = 5-oxo-L-proline + L-lysine. Functionally, may contribute to degradation of proteins cross-linked by transglutaminases by degrading the cross-link between a lysine and a glutamic acid residue. Catalyzes the formation of 5-oxo-L-proline from L-gamma-glutamyl-L-epsilon-lysine. This is Gamma-glutamylaminecyclotransferase (ggact) from Xenopus laevis (African clawed frog).